Reading from the N-terminus, the 436-residue chain is Serine--tRNA ligase (436 aa).

242 to 244 (TAE) is an L-serine binding site. 273–275 (RSE) is a binding site for ATP. Residue glutamate 296 participates in L-serine binding. 360-363 (EISS) lines the ATP pocket. Serine 395 serves as a coordination point for L-serine.

The protein belongs to the class-II aminoacyl-tRNA synthetase family. Type-1 seryl-tRNA synthetase subfamily. In terms of assembly, homodimer. The tRNA molecule binds across the dimer.

It localises to the cytoplasm. It catalyses the reaction tRNA(Ser) + L-serine + ATP = L-seryl-tRNA(Ser) + AMP + diphosphate + H(+). It carries out the reaction tRNA(Sec) + L-serine + ATP = L-seryl-tRNA(Sec) + AMP + diphosphate + H(+). It functions in the pathway aminoacyl-tRNA biosynthesis; selenocysteinyl-tRNA(Sec) biosynthesis; L-seryl-tRNA(Sec) from L-serine and tRNA(Sec): step 1/1. Functionally, catalyzes the attachment of serine to tRNA(Ser). Is also able to aminoacylate tRNA(Sec) with serine, to form the misacylated tRNA L-seryl-tRNA(Sec), which will be further converted into selenocysteinyl-tRNA(Sec). This Polynucleobacter necessarius subsp. necessarius (strain STIR1) protein is Serine--tRNA ligase.